Reading from the N-terminus, the 149-residue chain is MTESDTKITLIGSRLAREGLEFIFKGEMPECKKCRLKNTCLNLEPGRRYRVERIRSKDIHECFLHDSGVLAVDVSRAPILTTLESRKAVEGAKIMYEPAKCGKRECSVYEVCHPEGLLKGDKCKIVEVLESLDSKCEAGNSLKKVKLAW.

It belongs to the UPF0179 family.

The chain is UPF0179 protein MA_3685 from Methanosarcina acetivorans (strain ATCC 35395 / DSM 2834 / JCM 12185 / C2A).